A 670-amino-acid polypeptide reads, in one-letter code: Solute carrier organic anion transporter family member 1A5 (670 aa).

Over 1–20 (MGETEKRIATHGVRCFSKIK) the chain is Cytoplasmic. The helical transmembrane segment at 21–40 (MFLLALTCAYVSKSLSGIYM) threads the bilayer. Residues 41–59 (NSMLTQIERQFDIPTSIVG) lie on the Extracellular side of the membrane. The helical transmembrane segment at 60-80 (LINGSFEIGNLLLIILVSYFG) threads the bilayer. Residues 81 to 86 (TKLHRP) are Cytoplasmic-facing. A helical transmembrane segment spans residues 87–111 (IMIGIGCVIMGLGCFLMSLPHFLMG). The Extracellular segment spans residues 112-155 (RYEYETTISPTSNLSSNSFLCMENRTQTLKPTQDPAECVKEMKS). 2 N-linked (GlcNAc...) asparagine glycosylation sites follow: Asn124 and Asn135. The helical transmembrane segment at 156 to 184 (LMWIYVLVGNIIRGIGETPIMPLGISYIE) threads the bilayer. Residues 185–203 (DFAKSENSPLYIGILESGK) lie on the Cytoplasmic side of the membrane. The chain crosses the membrane as a helical span at residues 204-224 (MIGPIVGLLLGSFCARIYVDT). The Extracellular portion of the chain corresponds to 225–242 (GSVNTDDLTITPTDTRWV). The helical transmembrane segment at 243 to 267 (GAWWIGFLVCAGVNILTSIPFFFFP) threads the bilayer. Residues 268–311 (KTLPKEGLQDNVARTENDKEEKHREKAKEENRGITKDFLPFMKS) lie on the Cytoplasmic side of the membrane. A helical membrane pass occupies residues 312-333 (LSCNPIYMLLILTSVLQINAFI). At 334 to 353 (NMFTFLPKYLEQQYGKSTSE) the chain is on the extracellular side. Residues 354–377 (VVLLIGVCNLPPICIGYLLIGFIM) traverse the membrane as a helical segment. Residues 378 to 381 (KKFR) are Cytoplasmic-facing. The chain crosses the membrane as a helical span at residues 382 to 405 (ITVKKAAYMAFCLSLFEYLLSYFH). The Extracellular segment spans residues 406–513 (FMISCDNFQV…PECANKLQYF (108 aa)). A Kazal-like domain is found at 433-488 (NKVLADCNTRCSCLTNTWDPVCGDNGLSYMSACLAGCEKSVGMGTHMVFQNCSCIQ). Disulfide bonds link Cys439–Cys469, Cys445–Cys465, and Cys454–Cys486. N-linked (GlcNAc...) asparagine glycans are attached at residues Asn483 and Asn492. A helical transmembrane segment spans residues 514–536 (LIMSVIGSFIYSITAIPGYMVLL). The Cytoplasmic portion of the chain corresponds to 537–545 (RCIKSEEKS). Residues 546–571 (LGIGLHAFCTRIFAGIPAPIYFGALI) form a helical membrane-spanning segment. The Extracellular portion of the chain corresponds to 572–605 (DRTCLHWGTLKCGEPGACRIYNINNFRRIYLVLP). A helical transmembrane segment spans residues 606 to 623 (AALRGSSYLPAFFILILM). At 624–670 (RKFQLPGEMYSSETELADMKQTVKKSECTDVHGIPKVENDGELKTKL) the chain is on the cytoplasmic side.

Belongs to the organo anion transporter (TC 2.A.60) family. In terms of tissue distribution, expressed in brain, choroid plexus and lung, but not in liver or kidney.

It is found in the cell membrane. The protein resides in the basal cell membrane. It carries out the reaction taurocholate(out) = taurocholate(in). The catalysed reaction is glycocholate(out) = glycocholate(in). It catalyses the reaction taurochenodeoxycholate(out) = taurochenodeoxycholate(in). The enzyme catalyses tauroursodeoxycholate(out) = tauroursodeoxycholate(in). It carries out the reaction 3,3',5'-triiodo-L-thyronine(out) = 3,3',5'-triiodo-L-thyronine(in). The catalysed reaction is L-thyroxine(out) = L-thyroxine(in). It catalyses the reaction taurodeoxycholate(out) = taurodeoxycholate(in). The enzyme catalyses glycodeoxycholate(out) = glycodeoxycholate(in). It carries out the reaction glycochenodeoxycholate(out) = glycochenodeoxycholate(in). The catalysed reaction is glycoursodeoxycholate(out) = glycoursodeoxycholate(in). It catalyses the reaction estrone 3-sulfate(out) = estrone 3-sulfate(in). The enzyme catalyses prostaglandin E2(out) = prostaglandin E2(in). It carries out the reaction substance P(out) = substance P(in). Functionally, na(+)-independent transporter that mediates the cellular uptake of a broad range of organic anions such as the endogenous bile salts cholate and deoxycholate, either in their unconjugated or conjugated forms (taurocholate and glycocholate), estrone 3-sulfate and prostaglandin E2, at the plasma membrane. Responsible for intestinal absorption of bile acids. Capable of thyroid hormone transport (both T3 or 3,3',5'-triiodo-L-thyronine, and T4 or L-tyroxine). Plays roles in blood-brain and -cerebrospinal fluid barrier transport of organic anions and signal mediators, and in hormone uptake by neural cells. May also play a role in the reuptake of neuropeptides such as substance P/TAC1 and vasoactive intestinal peptide/VIP released from retinal neurons. Shows a pH-sensitive substrate specificity which may be ascribed to the protonation state of the binding site and leads to a stimulation of substrate transport in an acidic microenvironment. Hydrogencarbonate/HCO3(-) acts as the probable counteranion that exchanges for organic anions. May contribute to regulate the transport of organic compounds in testis across the blood-testis-barrier. The chain is Solute carrier organic anion transporter family member 1A5 (Slco1a5) from Mus musculus (Mouse).